We begin with the raw amino-acid sequence, 260 residues long: Acyl-[acyl-carrier-protein]--UDP-N-acetylglucosamine O-acyltransferase (260 aa).

This sequence belongs to the transferase hexapeptide repeat family. LpxA subfamily. In terms of assembly, homotrimer.

It localises to the cytoplasm. It carries out the reaction a (3R)-hydroxyacyl-[ACP] + UDP-N-acetyl-alpha-D-glucosamine = a UDP-3-O-[(3R)-3-hydroxyacyl]-N-acetyl-alpha-D-glucosamine + holo-[ACP]. The protein operates within glycolipid biosynthesis; lipid IV(A) biosynthesis; lipid IV(A) from (3R)-3-hydroxytetradecanoyl-[acyl-carrier-protein] and UDP-N-acetyl-alpha-D-glucosamine: step 1/6. Functionally, involved in the biosynthesis of lipid A, a phosphorylated glycolipid that anchors the lipopolysaccharide to the outer membrane of the cell. In Sulfurovum sp. (strain NBC37-1), this protein is Acyl-[acyl-carrier-protein]--UDP-N-acetylglucosamine O-acyltransferase.